Here is a 351-residue protein sequence, read N- to C-terminus: Protein RecA (351 aa).

67–74 (GPESSGKT) provides a ligand contact to ATP.

Belongs to the RecA family.

Its subcellular location is the cytoplasm. Functionally, can catalyze the hydrolysis of ATP in the presence of single-stranded DNA, the ATP-dependent uptake of single-stranded DNA by duplex DNA, and the ATP-dependent hybridization of homologous single-stranded DNAs. It interacts with LexA causing its activation and leading to its autocatalytic cleavage. The protein is Protein RecA of Mannheimia succiniciproducens (strain KCTC 0769BP / MBEL55E).